The following is a 131-amino-acid chain: MPFWFGVAVGGALGALARYGVSLLVAGRLASTAWGNFPLATLLVNVLGSFLLAFITTLALRGLVSPAWRLAVGTGFIGALTTFSTFAWESDLMVRDGEAARASLYVLGNLVLGYAAVLLGRALAARLGGGA.

A run of 4 helical transmembrane segments spans residues 5–25, 39–59, 70–90, and 104–124; these read FGVA…SLLV, LATL…TTLA, LAVG…AWES, and LYVL…RALA. Na(+) contacts are provided by glycine 78 and threonine 81.

Belongs to the fluoride channel Fluc/FEX (TC 1.A.43) family.

It localises to the cell membrane. The enzyme catalyses fluoride(in) = fluoride(out). With respect to regulation, na(+) is not transported, but it plays an essential structural role and its presence is essential for fluoride channel function. Its function is as follows. Fluoride-specific ion channel. Important for reducing fluoride concentration in the cell, thus reducing its toxicity. This Deinococcus geothermalis (strain DSM 11300 / CIP 105573 / AG-3a) protein is Fluoride-specific ion channel FluC 2.